The following is a 333-amino-acid chain: Elongation factor Ts, mitochondrial (333 aa).

The transit peptide at 1-17 (MLRTLRPTLPSRCLRLY) directs the protein to the mitochondrion.

It belongs to the EF-Ts family.

It localises to the mitochondrion. Its function is as follows. Associates with the EF-Tu.GDP complex and induces the exchange of GDP to GTP. It remains bound to the aminoacyl-tRNA.EF-Tu.GTP complex up to the GTP hydrolysis stage on the ribosome. This chain is Elongation factor Ts, mitochondrial, found in Coprinopsis cinerea (strain Okayama-7 / 130 / ATCC MYA-4618 / FGSC 9003) (Inky cap fungus).